The primary structure comprises 681 residues: DNA ligase (681 aa).

NAD(+) is bound by residues 34-38, 83-84, and Glu112; these read DEEYD and SL. Lys114 acts as the N6-AMP-lysine intermediate in catalysis. Positions 135, 169, 285, and 309 each coordinate NAD(+). Zn(2+) is bound by residues Cys403, Cys406, Cys422, and Cys427. A BRCT domain is found at 584–673; the sequence is TTSNILDGLT…GVELKESWKK (90 aa).

It belongs to the NAD-dependent DNA ligase family. LigA subfamily. Mg(2+) serves as cofactor. Mn(2+) is required as a cofactor.

The enzyme catalyses NAD(+) + (deoxyribonucleotide)n-3'-hydroxyl + 5'-phospho-(deoxyribonucleotide)m = (deoxyribonucleotide)n+m + AMP + beta-nicotinamide D-nucleotide.. In terms of biological role, DNA ligase that catalyzes the formation of phosphodiester linkages between 5'-phosphoryl and 3'-hydroxyl groups in double-stranded DNA using NAD as a coenzyme and as the energy source for the reaction. It is essential for DNA replication and repair of damaged DNA. The protein is DNA ligase of Fervidobacterium nodosum (strain ATCC 35602 / DSM 5306 / Rt17-B1).